The chain runs to 226 residues: Ribonuclease 3 (226 aa).

The RNase III domain occupies 6 to 128 (INRLQRKLGY…LIGGVFLDSD (123 aa)). Glu-41 contacts Mg(2+). Residue Asp-45 is part of the active site. Residues Asp-114 and Glu-117 each contribute to the Mg(2+) site. Glu-117 is an active-site residue. The region spanning 155–225 (DPKTRLQEFL…AEQALIKLEL (71 aa)) is the DRBM domain.

It belongs to the ribonuclease III family. As to quaternary structure, homodimer. Requires Mg(2+) as cofactor.

The protein localises to the cytoplasm. The enzyme catalyses Endonucleolytic cleavage to 5'-phosphomonoester.. Functionally, digests double-stranded RNA. Involved in the processing of primary rRNA transcript to yield the immediate precursors to the large and small rRNAs (23S and 16S). Processes some mRNAs, and tRNAs when they are encoded in the rRNA operon. Processes pre-crRNA and tracrRNA of type II CRISPR loci if present in the organism. The sequence is that of Ribonuclease 3 from Serratia proteamaculans (strain 568).